Reading from the N-terminus, the 167-residue chain is NAD(P)H-quinone oxidoreductase subunit I, chloroplastic (167 aa).

4Fe-4S ferredoxin-type domains lie at 55–84 (GRIHFEFDKCIACEVCVRVCPIDLPVVDWK) and 95–124 (LNYSIDFGICIFCGNCVEYCPTNCLSMTEE). The [4Fe-4S] cluster site is built by Cys-64, Cys-67, Cys-70, Cys-74, Cys-104, Cys-107, Cys-110, and Cys-114.

It belongs to the complex I 23 kDa subunit family. As to quaternary structure, NDH is composed of at least 16 different subunits, 5 of which are encoded in the nucleus. The cofactor is [4Fe-4S] cluster.

It localises to the plastid. The protein resides in the chloroplast thylakoid membrane. The catalysed reaction is a plastoquinone + NADH + (n+1) H(+)(in) = a plastoquinol + NAD(+) + n H(+)(out). It catalyses the reaction a plastoquinone + NADPH + (n+1) H(+)(in) = a plastoquinol + NADP(+) + n H(+)(out). Its function is as follows. NDH shuttles electrons from NAD(P)H:plastoquinone, via FMN and iron-sulfur (Fe-S) centers, to quinones in the photosynthetic chain and possibly in a chloroplast respiratory chain. The immediate electron acceptor for the enzyme in this species is believed to be plastoquinone. Couples the redox reaction to proton translocation, and thus conserves the redox energy in a proton gradient. The protein is NAD(P)H-quinone oxidoreductase subunit I, chloroplastic of Pelargonium hortorum (Common geranium).